The following is a 158-amino-acid chain: Transcription elongation factor GreA (158 aa).

Residues Gly-41 to Gly-61 are disordered. Positions Ala-51–Glu-74 form a coiled coil.

This sequence belongs to the GreA/GreB family.

Functionally, necessary for efficient RNA polymerase transcription elongation past template-encoded arresting sites. The arresting sites in DNA have the property of trapping a certain fraction of elongating RNA polymerases that pass through, resulting in locked ternary complexes. Cleavage of the nascent transcript by cleavage factors such as GreA or GreB allows the resumption of elongation from the new 3'terminus. GreA releases sequences of 2 to 3 nucleotides. The protein is Transcription elongation factor GreA of Nitrobacter hamburgensis (strain DSM 10229 / NCIMB 13809 / X14).